The chain runs to 62 residues: DNA-directed RNA polymerase subunit Rpo10 (62 aa).

4 residues coordinate Zn(2+): C6, C9, C43, and C44.

This sequence belongs to the archaeal Rpo10/eukaryotic RPB10 RNA polymerase subunit family. In terms of assembly, part of the RNA polymerase complex. Zn(2+) serves as cofactor.

The protein resides in the cytoplasm. The catalysed reaction is RNA(n) + a ribonucleoside 5'-triphosphate = RNA(n+1) + diphosphate. Its function is as follows. DNA-dependent RNA polymerase (RNAP) catalyzes the transcription of DNA into RNA using the four ribonucleoside triphosphates as substrates. The polypeptide is DNA-directed RNA polymerase subunit Rpo10 (Methanosphaerula palustris (strain ATCC BAA-1556 / DSM 19958 / E1-9c)).